Reading from the N-terminus, the 700-residue chain is UvrABC system protein C (700 aa).

The GIY-YIG domain maps to 11–90 (TTPGVYLYKD…IKKHRPRYNI (80 aa)). One can recognise a UVR domain in the interval 200-235 (TELIDMLRADMQAASDALEFEEAALLRDQLQAVERT).

It belongs to the UvrC family. Interacts with UvrB in an incision complex.

The protein resides in the cytoplasm. The UvrABC repair system catalyzes the recognition and processing of DNA lesions. UvrC both incises the 5' and 3' sides of the lesion. The N-terminal half is responsible for the 3' incision and the C-terminal half is responsible for the 5' incision. The chain is UvrABC system protein C from Oleidesulfovibrio alaskensis (strain ATCC BAA-1058 / DSM 17464 / G20) (Desulfovibrio alaskensis).